The primary structure comprises 333 residues: MPNHQNMLDNQTILITGGTGSFGKCFVRKVLDTTNAKKIIVYSRDELKQSEMAMEFNDPRMRFFIGDVRDLERLNYALEGVDICIHAAALKHVPIAEYNPLECIKTNIMGASNVINACLKNAISQVIALSTDKAANPINLYGATKLCSDKLFVSANNFKGSSQTQFSVVRYGNVVGSRGSVVPFFKKLVQNKASEIPITDIRMTRFWITLDEGVSFVLKSLKRMHGGEIFVPKIPSMKMTDLAKALAPNTPTKIIGIRPGEKLHEVMIPKDESHLALEFEDFFIIQPTISFQTPKDYTLTKLHEKGQKVAPDFEYSSHNNNQWLEPDDLLKLL.

NADP(+) contacts are provided by residues 19–22, 43–48, 67–68, Ala87, Lys91, and 129–130; these read TGSF, SRDELK, DV, and LS. Lys91 is a binding site for substrate. Residue Lys133 is part of the active site. 2 residues coordinate NADP(+): Tyr141 and Lys145. Asn173 contacts substrate. Position 174–178 (174–178) interacts with NADP(+); the sequence is VVGSR. Substrate contacts are provided by Val181, Thr199, Arg258, and Glu261.

The protein belongs to the polysaccharide synthase family. In terms of assembly, homohexamer. NADP(+) serves as cofactor.

The catalysed reaction is UDP-N-acetyl-alpha-D-glucosamine = UDP-2-acetamido-2,6-dideoxy-beta-L-arabino-hex-4-ulose + H2O. Its function is as follows. Catalyzes the first step in the biosynthesis of pseudaminic acid, a sialic-acid-like sugar that is used to modify flagellin. Has both C6 dehydratase and C5 epimerase activities that result in the production of both UDP-2-acetamido-2,6-dideoxy-beta-L-arabino-4-hexulose and UDP-2-acetamido-2,6-dideoxy-alpha-D-xylo-4-hexulose. The sequence is that of UDP-N-acetylglucosamine 4,6-dehydratase (inverting) (pseB) from Helicobacter pylori (strain ATCC 700392 / 26695) (Campylobacter pylori).